Consider the following 470-residue polypeptide: Hydroxymethylglutaryl-CoA synthase (470 aa).

Glutamate 100 acts as the Proton donor/acceptor in catalysis. Cysteine 134 functions as the Acyl-thioester intermediate in the catalytic mechanism. Positions 134, 176, 225, 269, 278, 348, and 382 each coordinate (3S)-3-hydroxy-3-methylglutaryl-CoA. Histidine 269 (proton donor/acceptor) is an active-site residue.

The protein belongs to the thiolase-like superfamily. HMG-CoA synthase family.

It catalyses the reaction acetoacetyl-CoA + acetyl-CoA + H2O = (3S)-3-hydroxy-3-methylglutaryl-CoA + CoA + H(+). Its pathway is metabolic intermediate biosynthesis; (R)-mevalonate biosynthesis; (R)-mevalonate from acetyl-CoA: step 2/3. Functionally, hydroxymethylglutaryl-CoA synthase; part of the first module of ergosterol biosynthesis pathway that includes the early steps of the pathway, conserved across all eukaryotes, and which results in the formation of mevalonate from acetyl-coenzyme A (acetyl-CoA). This module also plays a key role in the biosynthesis of triterpenes such as ganoderic acids (GA), a group of highly oxygenated lanostane-type triterpenoids which are well recognized as a main group of unique bioactive compounds in the medicinal mushroom Ganoderma lucidum. In this module, the acetyl-CoA acetyltransferase catalyzes the formation of acetoacetyl-CoA. The hydroxymethylglutaryl-CoA synthase HMGS then condenses acetyl-CoA with acetoacetyl-CoA to form HMG-CoA. The rate-limiting step of the early module is the reduction to mevalonate by the 3-hydroxy-3-methylglutaryl-coenzyme A (HMG-CoA) reductase. In Ganoderma lucidum (Ling zhi medicinal fungus), this protein is Hydroxymethylglutaryl-CoA synthase.